The following is a 396-amino-acid chain: Putative arsenical pump-driving ATPase 1 (396 aa).

G8–T15 is an ATP binding site.

This sequence belongs to the arsA ATPase family.

The catalysed reaction is arsenite(in) + ATP + H2O = arsenite(out) + ADP + phosphate + H(+). Functionally, anion-transporting ATPase. Catalyzes the extrusion of arsenite. In Aquifex aeolicus (strain VF5), this protein is Putative arsenical pump-driving ATPase 1 (arsA1).